The sequence spans 411 residues: Putative acid phosphatase 10 (411 aa).

His33 serves as the catalytic Nucleophile. Asp313 functions as the Proton donor in the catalytic mechanism. An intrachain disulfide couples Cys379 to Cys385.

The protein belongs to the histidine acid phosphatase family.

It catalyses the reaction a phosphate monoester + H2O = an alcohol + phosphate. This is Putative acid phosphatase 10 (pho-10) from Caenorhabditis elegans.